Here is a 241-residue protein sequence, read N- to C-terminus: Terpene cyclase pyr4 (241 aa).

7 helical membrane passes run 20–40 (IADW…LAMI), 49–69 (YGMA…YSVI), 79–99 (AVLT…IKFA), 113–133 (LPWI…ALAA), 141–161 (ANWG…CQLM), 168–188 (GASY…GIFL), and 206–226 (FVTW…TFLW).

It belongs to the paxB family.

Its subcellular location is the membrane. The enzyme catalyses 2-oxo-3-[(8S)-epoxy-(2E,6E)-farnesyl]-6-(pyridin-3-yl)-2H-pyran-4-olate + H(+) = deacetylpyripyropene E. It functions in the pathway secondary metabolite biosynthesis; terpenoid biosynthesis. Its function is as follows. Terpene cyclase; part of the gene cluster that mediates the biosynthesis of pyripyropene A, a specific human acyl-coenzyme A:cholesterol acyltransferase 2 inhibitor. The first step of the pathway is the synthesis of nicotinyl-CoA from nicotinic acid by the nicotinic acid-CoA ligase pyr1. Nicotinyl-CoA is then a substrate of polyketide synthase pyr2 to produce 4-hydroxy-6-(3-pyridinyl)-2H-pyran-2-one (HPPO) which is further prenylated by the polyprenyl transferase pyr6 to yield farnesyl-HPPO. The next steps consist of an epoxidation of farnesyl-HPPO to epoxyfarnesyl-HPPO by FAD-dependent monooxygenase pyr5 and a cyclization of the terpenoid portion by the terpene cyclase pyr4 to yield deacetyl-pyripyropene E. The 2 cytochrome P450 monooxygenases pyr3 and pyr9, and the 2 acetyltransferases pyr7 and pyr8 are involved in the conversion of deacetyl-pyripyropene E into pyripyropene A through several cycles of oxidation and acetylation steps. Pyr7 acetylates deacetyl-pyripyropene E to pyripyropene E which is oxidized to 11-deacetyl-pyripyropene O by pyr3, which is in turn acetylated into pyripyropene O by pyr8. Pyripyropene O is then oxidized to deacetyl-pyripyropene A by pyr9. Deacetyl-pyripyropene A is finally acetylated to pyripyropene A by pyr8. The protein is Terpene cyclase pyr4 of Aspergillus fumigatus (strain ATCC MYA-4609 / CBS 101355 / FGSC A1100 / Af293) (Neosartorya fumigata).